Reading from the N-terminus, the 66-residue chain is FMRFamide-like neuropeptide 21 (66 aa).

The N-terminal stretch at 1-16 is a signal peptide; that stretch reads MRLFILLSCLLAWVLA.

It belongs to the FARP (FMRFamide related peptide) family. Post-translationally, may be processed by convertase egl-3. As to expression, expressed in the ADL, ASE and ASH sensory neurons, the URA motor neurons and the MC, M2 and M4 pharyngeal neurons.

The protein resides in the secreted. FMRFamide-like neuropeptide. Involved in modulating locomotion quiescence during the sleep-like state called lethargus which occurs during molting between larval and adult stages, acting via the G-protein coupled receptor npr-1. Plays a role in modulating social and feeding behavior. In terms of biological role, ligand to G-protein coupled receptor npr-1. The chain is FMRFamide-like neuropeptide 21 from Caenorhabditis elegans.